A 182-amino-acid chain; its full sequence is RFKKIRRLGALPGFTSKRPRSGSDLKNPLRSGKRSQYRIRLEEKQKLRFHYGLTERQLLRYVQIARKAKGSTGQVLLQLLEMRLDNILFRLGMASTIPGARQLVNHRHILVNGRIVDIPSYRCKPRDIITTKDKQRSKALIQNSIASAPREELPNHLTIDSFQYKGLVNQIIDSKWIGLKIN.

The interval 12-31 (PGFTSKRPRSGSDLKNPLRS) is disordered. An S4 RNA-binding domain is found at 82–143 (MRLDNILFRL…KQRSKALIQN (62 aa)).

This sequence belongs to the universal ribosomal protein uS4 family. As to quaternary structure, part of the 30S ribosomal subunit. Contacts protein S5. The interaction surface between S4 and S5 is involved in control of translational fidelity.

It localises to the plastid. It is found in the chloroplast. One of the primary rRNA binding proteins, it binds directly to 16S rRNA where it nucleates assembly of the body of the 30S subunit. Its function is as follows. With S5 and S12 plays an important role in translational accuracy. The chain is Small ribosomal subunit protein uS4c (rps4) from Hymenocallis littoralis (Beach spider-lily).